Reading from the N-terminus, the 152-residue chain is MSSKLEQLQALLAPVVEALGYQCWGIEFISQGRHSLLRVYIDHANGILIDDCEKVSRQLSGVLDVEDPISVDYTLEVSSPGMDRPLFTIEQYVAHVGDQVKIKLRSPFEGRRNFQGLLRGVEEQDVVVLVDDHEYLLPIDMIDKANIIPRFD.

The protein belongs to the RimP family.

The protein localises to the cytoplasm. Functionally, required for maturation of 30S ribosomal subunits. In Stutzerimonas stutzeri (strain A1501) (Pseudomonas stutzeri), this protein is Ribosome maturation factor RimP.